The following is a 647-amino-acid chain: Threonine--tRNA ligase (647 aa).

Positions 1 to 61 (MIKITFPDGA…EEDGSIEIVT (61 aa)) constitute a TGS domain. The interval 240–538 (DHRKLGKELD…LIETYKGAFP (299 aa)) is catalytic. Residues Cys334, His385, and His515 each coordinate Zn(2+).

The protein belongs to the class-II aminoacyl-tRNA synthetase family. In terms of assembly, homodimer. The cofactor is Zn(2+).

The protein resides in the cytoplasm. It catalyses the reaction tRNA(Thr) + L-threonine + ATP = L-threonyl-tRNA(Thr) + AMP + diphosphate + H(+). Its function is as follows. Catalyzes the attachment of threonine to tRNA(Thr) in a two-step reaction: L-threonine is first activated by ATP to form Thr-AMP and then transferred to the acceptor end of tRNA(Thr). Also edits incorrectly charged L-seryl-tRNA(Thr). This chain is Threonine--tRNA ligase, found in Streptococcus pyogenes serotype M28 (strain MGAS6180).